Reading from the N-terminus, the 943-residue chain is Isoleucine--tRNA ligase (943 aa).

The 'HIGH' region signature appears at 59–69; it reads PYANGQIHLGH. Glu577 contacts L-isoleucyl-5'-AMP. The short motif at 618–622 is the 'KMSKS' region element; that stretch reads KMSKS. Lys621 serves as a coordination point for ATP. The Zn(2+) site is built by Cys906, Cys909, Cys926, and Cys929.

Belongs to the class-I aminoacyl-tRNA synthetase family. IleS type 1 subfamily. As to quaternary structure, monomer. Zn(2+) is required as a cofactor.

Its subcellular location is the cytoplasm. The enzyme catalyses tRNA(Ile) + L-isoleucine + ATP = L-isoleucyl-tRNA(Ile) + AMP + diphosphate. Its function is as follows. Catalyzes the attachment of isoleucine to tRNA(Ile). As IleRS can inadvertently accommodate and process structurally similar amino acids such as valine, to avoid such errors it has two additional distinct tRNA(Ile)-dependent editing activities. One activity is designated as 'pretransfer' editing and involves the hydrolysis of activated Val-AMP. The other activity is designated 'posttransfer' editing and involves deacylation of mischarged Val-tRNA(Ile). The protein is Isoleucine--tRNA ligase of Xanthomonas campestris pv. campestris (strain 8004).